We begin with the raw amino-acid sequence, 86 residues long: MTRFVLFISCFFLIDMIVECKKEGYLVGNDGCKYGCITRPHQYCVHECELKKGTDGYCAYWLACYCYNMPDWVKTWSSATNKCKGK.

An N-terminal signal peptide occupies residues 1 to 20 (MTRFVLFISCFFLIDMIVEC). The 63-residue stretch at 22 to 84 (KEGYLVGNDG…TWSSATNKCK (63 aa)) folds into the LCN-type CS-alpha/beta domain. Intrachain disulfides connect Cys32-Cys83, Cys36-Cys58, Cys44-Cys64, and Cys48-Cys66. Lys84 carries the post-translational modification Lysine amide.

This sequence belongs to the long (4 C-C) scorpion toxin superfamily. Sodium channel inhibitor family. Beta subfamily. As to expression, expressed by the venom gland.

Its subcellular location is the secreted. Beta toxin that show multiple effects. It enhances the open probability at more negative potentials of human Nav1.3/SCN3A and Nav1.6/SCN8A, of the insect channel BgNaV1 and of arachnid VdNaV1 channel. It promotes an important shift in slow inactivation processes as a function of the prepulse voltage in human Nav1.3/SCN3A and Nav1.6/SCN8A and a small shift in Nav1.1/SCN1A, Nav1.2/SCN2A and Nav1.4/SCN4A. Finally, it reduces the peak of sodium currents in Nav1.3/SCN3A (80% inhibition at 70 nM of toxin), Nav1.6/SCN8A (55.3%), Nav1.1/SCN1A (53.3%), Nav1.5/SCN5A (46.7%), Nav1.2/SCN2A (42.7%) and Nav1.4/SCN4A (20%) voltage-gated sodium channels. It has also been shown to affect the sodium current permeability of rat cerebellum granular cells in a partially reversible manner. In vivo, an intraperitoneal injection (20 ug) into mice produces excitability, respiratory problems, convulsions and death, within the first 30 minutes after injection. This is Beta-mammal/insect toxin To1 from Tityus obscurus (Amazonian scorpion).